Here is a 443-residue protein sequence, read N- to C-terminus: Histone deacetylase 10, chloroplastic (443 aa).

The N-terminal 65 residues, 1–65 (MEQLWVPSLP…PSHNGTSISD (65 aa)), are a transit peptide targeting the chloroplast. The histone deacetylase stretch occupies residues 82–412 (DAHILYCTSP…FRAFLGEPSL (331 aa)). The active-site Proton donor/acceptor is His-222. Residues Asp-259, His-261, and Asp-346 each coordinate Zn(2+).

This sequence belongs to the histone deacetylase family. Requires Zn(2+) as cofactor. As to expression, expressed in leaves. Expressed in coleoptiles, leaves, flag leaves and flowers. Expressed at low levels in roots.

The protein resides in the plastid. Its subcellular location is the chloroplast. It localises to the mitochondrion. It catalyses the reaction N-acetylserotonin + H2O = serotonin + acetate. It carries out the reaction N-acetyltyramine + H2O = tyramine + acetate. The catalysed reaction is N-acetyltryptamine + H2O = tryptamine + acetate. The enzyme catalyses melatonin + H2O = 5-methoxytryptamine + acetate. The activity of this enzyme is not inhibited by butyrate, a well-known histone deacetylase inhibitor. Functionally, involved in the regulation of melatonin biosynthesis by catalyzing the deacetylation of N-acetylserotonin to produce serotonin. N-acetylserotonin is methylated by acetylserotonin O-methyltransferase (ASMT) to produce melatonin (N-acetyl-5-methoxytryptamine). Deacetylates melatonin to produce 5-methoxytryptamine. In vitro, deacetylates N-acetyltyramine and N-acetyltryptamine to produce tyramine and tryptamine, respectively. This Oryza sativa subsp. japonica (Rice) protein is Histone deacetylase 10, chloroplastic.